A 132-amino-acid polypeptide reads, in one-letter code: Hemoglobin heart muscle subunit alpha-type (132 aa).

Residues 1–132 (GLSDSEKSAV…GEVGAILTSS (132 aa)) form the Globin domain. Positions 58 and 83 each coordinate heme b.

This sequence belongs to the globin family. Monomer.

Its function is as follows. This hemoglobin may replace myocardial myoglobin in this amphibian species. The sequence is that of Hemoglobin heart muscle subunit alpha-type from Aquarana catesbeiana (American bullfrog).